The chain runs to 62 residues: Trypsin inhibitor MCI-3 (62 aa).

This sequence belongs to the protease inhibitor I13 (potato type I serine protease inhibitor) family.

The protein is Trypsin inhibitor MCI-3 of Momordica charantia (Bitter gourd).